We begin with the raw amino-acid sequence, 1040 residues long: Nucleotide-binding oligomerization domain-containing protein 2 (1040 aa).

CARD domains are found at residues 26-122 (CEMC…LHGC) and 126-218 (HSLH…EAAT). The short motif at 63-77 (WEVLSWEDYEGFHLL) is the ATG16L1-binding motif element. Positions 239, 252, 253, 302, 303, 304, 305, 306, and 307 each coordinate ADP. The required for CARD9 binding stretch occupies residues 241–274 (DGAETLCLEDIYTENVLEVWADVGMAGPPQKSPA). The region spanning 293–618 (DTVLVVGEAG…FFAAFYLALS (326 aa)) is the NACHT domain. 299–306 (GEAGSGKS) provides a ligand contact to ATP. Cysteine 395 carries the S-palmitoyl cysteine lipid modification. Histidine 603 is a binding site for ADP. 9 LRR repeats span residues 791 to 812 (RPVA…QLLP), 816 to 839 (VCKA…IECA), 844 to 865 (QLQK…SMAK), 872 to 884 (NFLA…NYIT), 900 to 920 (SLQF…QALA), 928 to 949 (SLRW…ALAL), 956 to 976 (MLEE…CSLA), 984 to 1005 (SLKI…ALLQ), and 1012 to 1032 (TILE…DKLG). Cysteine 1033 is lipidated: S-palmitoyl cysteine.

It belongs to the NOD1-NOD2 family. As to quaternary structure, homooligomer: homooligomerizes following muramyl dipeptide (MDP)-binding, promoting RIPK2 recruitment. Interacts (via CARD domain) with RIPK2 (via CARD domain). Following RIPK2 recruitment, RIPK2 homooligomerizes via its CARD domain and forms long filaments named RIPosomes. Interacts (via CARD domain) with ubiquitin; inhibiting interaction with RIPK2. Component of a signaling complex consisting of ARHGEF2, NOD2 and RIPK2. Interacts with ANKRD17 (via N-terminus). Interacts with HSPA1A; the interaction enhances NOD2 stability. Interacts (via both CARD domains) with HSP90; the interaction enhances NOD2 stability. Interacts (via CARD domain) with SOCS3; the interaction promotes NOD2 degradation. Interacts (via CARD domain) with ERBIN; the interaction inhibits activation of NOD2. Interacts with MAPKBP1; the interaction is enhanced in the presence of muramyl dipeptide (MDP) and inhibits NOD2 homooligomerization and activation. Interacts with INAVA; the interaction takes place upon Pattern recognition receptor (PRR) stimulation. Interacts (via NACHT domain) with CARD9. Interacts (via CARD domain) with CASP1; this interaction leads to IL1B processing. Also interacts with CASP4. Interacts with NLRP1; this interaction is enhanced in the presence of muramyl dipeptide (MDP) and leads to increased IL1B release. Interacts with NLRP12; this interaction promotes degradation of NOD2 through the ubiquitin-proteasome pathway. Interacts with ANKHD1, C10orf67, CHMP5, DOCK7, ENTR1, KRT15, LDOC1, PPP1R12C, PPP2R3B, TRIM41 and VIM. Interacts with MAVS; interaction takes place following single-stranded RNA (ssRNA)-binding. Interacts with ATG16L1. Interacts with IRGM; promoting IRGM 'Lys-63'-linked polyubiquitination, which is required for interactions with the core autophagy factors. Palmitoylated by ZDHHC5; palmitoylation is required for proper recruitment to the bacterial entry site and hence for proper signaling upon cognate peptidoglycan detection. Palmitoylation promotes localization to the cell membrane. Palmitoylation protects from SQSTM1/p62-dependent autophagic degradation. In terms of processing, polyubiquitinated by TRIM27, leading to proteasome-mediated degradation. Polyubiquitinated and degraded following muramyl dipeptide (MDP) stimulation, conferring MDP tolerance and preventing septic shock. Post-translationally, degraded via selective autophagy following interaction with IRGM. IRGM promotes NOD2-RIPK2 RIPosome recruitment to autophagosome membranes, promoting their SQSTM1/p62-dependent autophagic degradation. O-glycosylated by OGT, O-GlcNAcylation increases protein stability. As to expression, expressed in monocytes, macrophages, dendritic cells, hepatocytes, preadipocytes, epithelial cells of oral cavity, lung and intestine, with higher expression in ileal Paneth cells and in intestinal stem cells. In terms of tissue distribution, expressed at higher level in leukocytes.

It localises to the cell membrane. The protein localises to the basolateral cell membrane. It is found in the cytoplasm. The protein resides in the mitochondrion. Its activity is regulated as follows. ADP-binding promotes an inactive closed conformation. In terms of biological role, pattern recognition receptor (PRR) that detects bacterial peptidoglycan fragments and other danger signals and plays an important role in gastrointestinal immunity. Specifically activated by muramyl dipeptide (MDP), a fragment of bacterial peptidoglycan found in every bacterial peptidoglycan type. NOD2 specifically recognizes and binds 6-O-phospho-MDP, the phosphorylated form of MDP, which is generated by NAGK. 6-O-phospho-MDP-binding triggers oligomerization that facilitates the binding and subsequent activation of the proximal adapter receptor-interacting RIPK2. Following recruitment, RIPK2 undergoes 'Met-1'- (linear) and 'Lys-63'-linked polyubiquitination by E3 ubiquitin-protein ligases XIAP, BIRC2, BIRC3 and the LUBAC complex, becoming a scaffolding protein for downstream effectors, triggering activation of the NF-kappa-B and MAP kinases signaling. This in turn leads to the transcriptional activation of hundreds of genes involved in immune response. Its ability to detect bacterial MDP plays a central role in maintaining the equilibrium between intestinal microbiota and host immune responses to control inflammation. An imbalance in this relationship results in dysbiosis, whereby pathogenic bacteria prevail on commensals, causing damage in the intestinal epithelial barrier as well as allowing bacterial invasion and inflammation. Acts as a regulator of appetite by sensing MDP in a subset of brain neurons: microbiota-derived MDP reach the brain, where they bind and activate NOD2 in inhibitory hypothalamic neurons, decreasing neuronal activity, thereby regulating satiety and body temperature. NOD2-dependent MDP-sensing of bacterial cell walls in the intestinal epithelial compartment contributes to sustained postnatal growth upon undernutrition. Also plays a role in antiviral response by acting as a sensor of single-stranded RNA (ssRNA) from viruses: upon ssRNA-binding, interacts with MAVS, leading to activation of interferon regulatory factor-3/IRF3 and expression of type I interferon. Also acts as a regulator of autophagy in dendritic cells via its interaction with ATG16L1, possibly by recruiting ATG16L1 at the site of bacterial entry. NOD2 activation in the small intestine crypt also contributes to intestinal stem cells survival and function: acts by promoting mitophagy via its association with ATG16L1. In addition to its main role in innate immunity, also regulates the adaptive immune system by acting as regulator of helper T-cell and regulatory T-cells (Tregs). Besides recognizing pathogens, also involved in the endoplasmic reticulum stress response: acts by sensing and binding to the cytosolic metabolite sphingosine-1-phosphate generated in response to endoplasmic reticulum stress, initiating an inflammation process that leads to activation of the NF-kappa-B and MAP kinases signaling. May also be involved in NLRP1 activation following activation by MDP, leading to CASP1 activation and IL1B release in macrophages. Functionally, acts as a pattern recognition receptor (PRR); able to activate NF-kappa-B. Can activate NF-kappa-B in a muramyl dipeptide (MDP)-independent manner. The sequence is that of Nucleotide-binding oligomerization domain-containing protein 2 from Homo sapiens (Human).